Here is a 341-residue protein sequence, read N- to C-terminus: Delta(1)-pyrroline-2-carboxylate/Delta(1)-piperideine-2-carboxylate reductase (341 aa).

Catalysis depends on serine 52, which acts as the Charge relay system. Histidine 53 serves as the catalytic Proton donor. Substrate is bound at residue arginine 57. 125–129 (HFAAL) lines the NADP(+) pocket. Threonine 165 contacts substrate. 183-185 (DMA) contacts NADP(+). 191 to 192 (HG) lines the substrate pocket. Catalysis depends on aspartate 193, which acts as the Charge relay system. Residues 235 to 236 (HK) and 308 to 314 (RMPGERR) contribute to the NADP(+) site.

It belongs to the LDH2/MDH2 oxidoreductase family. In terms of assembly, homodimer.

It carries out the reaction L-pipecolate + NADP(+) = Delta(1)-piperideine-2-carboxylate + NADPH + H(+). It catalyses the reaction L-proline + NADP(+) = 1-pyrroline-2-carboxylate + NADPH + H(+). The enzyme catalyses N-methyl-L-alanine + NADP(+) + H2O = methylamine + pyruvate + NADPH + H(+). With respect to regulation, is inhibited by the substrate analog pyrrole-2-carboxylate, but not by N-formylphenylalanine. Catalyzes the reduction of both Delta(1)-pyrroline-2-carboxylate (Pyr2C) and Delta(1)-piperideine-2-carboxylate (Pip2C) to L-proline and L-pipecolate, respectively, using NADPH as the electron donor. Can use NADH instead of NADPH, although with much less efficiency. Plays an essential role in the catabolism of D-proline and D-lysine, which allows P.putida to grow on each of these amino-acids as a sole carbon source; D-lysine appears to be catabolized only through the pipecolate pathway. Can also catalyze the reverse oxidation reactions, albeit at a much lower rate. To a lesser extent, is able to catalyze in vitro the NADPH-dependent formation of N-alkyl-L-amino acids from the corresponding alpha-oxo acids and alkylamines, e.g. the formation of N-methylalanine from pyruvate and N-methylamine; cannot use ammonia as substrate for these reductive amination reactions. Shows neither malate dehydrogenase nor lactate dehydrogenase activity. This chain is Delta(1)-pyrroline-2-carboxylate/Delta(1)-piperideine-2-carboxylate reductase, found in Pseudomonas putida (Arthrobacter siderocapsulatus).